Reading from the N-terminus, the 205-residue chain is 3-isopropylmalate dehydratase small subunit (205 aa).

The protein belongs to the LeuD family. LeuD type 1 subfamily. In terms of assembly, heterodimer of LeuC and LeuD.

It carries out the reaction (2R,3S)-3-isopropylmalate = (2S)-2-isopropylmalate. It functions in the pathway amino-acid biosynthesis; L-leucine biosynthesis; L-leucine from 3-methyl-2-oxobutanoate: step 2/4. In terms of biological role, catalyzes the isomerization between 2-isopropylmalate and 3-isopropylmalate, via the formation of 2-isopropylmaleate. The sequence is that of 3-isopropylmalate dehydratase small subunit (leuD) from Buchnera aphidicola subsp. Thelaxes suberi.